We begin with the raw amino-acid sequence, 596 residues long: 3-hydroxy-3-methylglutaryl-coenzyme A reductase 1 (596 aa).

The interval 1–29 (MDVRRRPVKPLYTSKDASAGEPLKQQEVS) is disordered. 2 consecutive transmembrane segments (helical) span residues 41–61 (LYLT…FLLV) and 83–103 (AMVS…IGFV). The tract at residues 104 to 183 (QSFVSRSNSD…SPIIMPALSE (80 aa)) is linker. A catalytic region spans residues 184–596 (DDEEIIQSVV…YNRSIKDISK (413 aa)). The active-site Charge relay system is Glu278. A glycan (N-linked (GlcNAc...) asparagine) is linked at Asn342. Catalysis depends on Lys410, which acts as the Charge relay system. N-linked (GlcNAc...) asparagine glycosylation occurs at Asn455. The active-site Charge relay system is the Asp486. His584 acts as the Proton donor in catalysis. An N-linked (GlcNAc...) asparagine glycan is attached at Asn588.

It belongs to the HMG-CoA reductase family. Expressed in flower primordia and anthers.

Its subcellular location is the endoplasmic reticulum membrane. The enzyme catalyses (R)-mevalonate + 2 NADP(+) + CoA = (3S)-3-hydroxy-3-methylglutaryl-CoA + 2 NADPH + 2 H(+). It participates in metabolic intermediate biosynthesis; (R)-mevalonate biosynthesis; (R)-mevalonate from acetyl-CoA: step 3/3. Its function is as follows. Catalyzes the synthesis of mevalonate. The specific precursor of all isoprenoid compounds present in plants. This Solanum tuberosum (Potato) protein is 3-hydroxy-3-methylglutaryl-coenzyme A reductase 1 (HMG1).